The primary structure comprises 299 residues: Pyridoxal 5'-phosphate synthase subunit PdxS (299 aa).

Asp-29 is a binding site for D-ribose 5-phosphate. Catalysis depends on Lys-86, which acts as the Schiff-base intermediate with D-ribose 5-phosphate. Gly-158 lines the D-ribose 5-phosphate pocket. Arg-170 serves as a coordination point for D-glyceraldehyde 3-phosphate. Residues Gly-219 and 240 to 241 contribute to the D-ribose 5-phosphate site; that span reads GS.

Belongs to the PdxS/SNZ family. As to quaternary structure, in the presence of PdxT, forms a dodecamer of heterodimers.

The catalysed reaction is aldehydo-D-ribose 5-phosphate + D-glyceraldehyde 3-phosphate + L-glutamine = pyridoxal 5'-phosphate + L-glutamate + phosphate + 3 H2O + H(+). It participates in cofactor biosynthesis; pyridoxal 5'-phosphate biosynthesis. In terms of biological role, catalyzes the formation of pyridoxal 5'-phosphate from ribose 5-phosphate (RBP), glyceraldehyde 3-phosphate (G3P) and ammonia. The ammonia is provided by the PdxT subunit. Can also use ribulose 5-phosphate and dihydroxyacetone phosphate as substrates, resulting from enzyme-catalyzed isomerization of RBP and G3P, respectively. This Mycobacterium bovis (strain ATCC BAA-935 / AF2122/97) protein is Pyridoxal 5'-phosphate synthase subunit PdxS.